The chain runs to 311 residues: Probable acetylxylan esterase A (311 aa).

Residues 1–19 (MAPFSFILTVLLYALTCSA) form the signal peptide. The active-site Charge relay system is serine 153. Asparagine 197 and asparagine 224 each carry an N-linked (GlcNAc...) asparagine glycan.

It belongs to the carbohydrate esterase 1 (CE1) family. AxeA subfamily. Monomer.

The protein resides in the secreted. It carries out the reaction Deacetylation of xylans and xylo-oligosaccharides.. It functions in the pathway glycan degradation; xylan degradation. Functionally, acetylxylan esterase involved in the hydrolysis of xylan, a major structural heterogeneous polysaccharide found in plant biomass representing the second most abundant polysaccharide in the biosphere, after cellulose. Degrades acetylated xylans by cleaving acetyl side groups from the hetero-xylan backbone. The chain is Probable acetylxylan esterase A (axeA) from Aspergillus terreus (strain NIH 2624 / FGSC A1156).